The chain runs to 25 residues: Chaperonin GroEL (25 aa).

This sequence belongs to the chaperonin (HSP60) family. As to quaternary structure, forms a cylinder of 14 subunits composed of two heptameric rings stacked back-to-back. Interacts with the co-chaperonin GroES.

The protein localises to the cytoplasm. The enzyme catalyses ATP + H2O + a folded polypeptide = ADP + phosphate + an unfolded polypeptide.. Together with its co-chaperonin GroES, plays an essential role in assisting protein folding. The GroEL-GroES system forms a nano-cage that allows encapsulation of the non-native substrate proteins and provides a physical environment optimized to promote and accelerate protein folding. This Delftia acidovorans (Pseudomonas acidovorans) protein is Chaperonin GroEL.